A 219-amino-acid chain; its full sequence is Apoptosis regulator OPG045 (219 aa).

This sequence belongs to the orthopoxvirus OPG045 family. Homodimer. Interacts with host pro-apoptotic protein BCL2L11 (via BH3 domain). Interacts with host NLRP1. Interacts with host BAK.

Its subcellular location is the host mitochondrion outer membrane. The protein resides in the host cytoplasm. Functionally, plays a role in evading host innate immune response by inhibiting host inflammasome activation. Interacts with and inhibits NLR-mediated interleukin-1 beta/IL1B production in infected cells. At the host mitochondria outer membrane, interacts with the BH3 domain of host BAK and prevents BAK from binding active BAX. In turn, host apoptosis is inhibited. The sequence is that of Apoptosis regulator OPG045 (OPG045) from Cynomys gunnisoni (Gunnison's prairie dog).